The sequence spans 345 residues: Very-long-chain 3-oxoacyl-CoA reductase (345 aa).

A helical membrane pass occupies residues Gly-26–Val-46. Positions 71, 125, 133, 152, 219, 223, 252, and 254 each coordinate NADP(+). Tyr-219 (proton donor) is an active-site residue. Residue Lys-223 is the Lowers pKa of active site Tyr of the active site.

The protein belongs to the short-chain dehydrogenases/reductases (SDR) family.

It is found in the endoplasmic reticulum membrane. It catalyses the reaction a very-long-chain (3R)-3-hydroxyacyl-CoA + NADP(+) = a very-long-chain 3-oxoacyl-CoA + NADPH + H(+). It participates in lipid metabolism; fatty acid biosynthesis. Component of the microsomal membrane bound fatty acid elongation system, which produces the 26-carbon very long-chain fatty acids (VLCFA) from palmitate. Catalyzes the reduction of the 3-ketoacyl-CoA intermediate that is formed in each cycle of fatty acid elongation. VLCFAs serve as precursors for ceramide and sphingolipids. This is Very-long-chain 3-oxoacyl-CoA reductase from Aspergillus fumigatus (strain CBS 144.89 / FGSC A1163 / CEA10) (Neosartorya fumigata).